The sequence spans 1392 residues: ATP-dependent helicase/nuclease subunit A (1392 aa).

The region spanning 4 to 595 is the UvrD-like helicase ATP-binding domain; sequence FKPTPAQSKA…IVLGENFRSM (592 aa). Position 25–32 (25–32) interacts with ATP; it reads ASAGSGKT. The 307-residue stretch at 623 to 929 folds into the UvrD-like helicase C-terminal domain; it reads AHLKYAATYY…NVMTIHGSKG (307 aa).

It belongs to the helicase family. AddA subfamily. In terms of assembly, heterodimer of AddA and AddB/RexB. The cofactor is Mg(2+).

It carries out the reaction Couples ATP hydrolysis with the unwinding of duplex DNA by translocating in the 3'-5' direction.. It catalyses the reaction ATP + H2O = ADP + phosphate + H(+). Its function is as follows. The heterodimer acts as both an ATP-dependent DNA helicase and an ATP-dependent, dual-direction single-stranded exonuclease. Recognizes the chi site generating a DNA molecule suitable for the initiation of homologous recombination. The AddA nuclease domain is required for chi fragment generation; this subunit has the helicase and 3' -&gt; 5' nuclease activities. The sequence is that of ATP-dependent helicase/nuclease subunit A from Limosilactobacillus reuteri subsp. reuteri (strain JCM 1112) (Lactobacillus reuteri).